Here is a 331-residue protein sequence, read N- to C-terminus: MKWLVGLLPLCSYAVAQVHKDPTLDHHWNLWKKTYSKQYKEENEEVARRLIWEKNLKFVMLHNLEHSMGMHSYDLGMNHLGDMTGEEVISLMGSLRVPSQWQRNVTYRSNSNQKLPDSVDWREKGCVTEVKYQGSCGACWAFSAVGALEAQLKLKTGKLVSLSAQNLVDCSTEKYGNKGCNGGFMTTAFQYIIDNNGIDSEASYPYKAMNGKCRYDSKKRAATCSKYTELPFGSEDALKEAVANKGPVSVAIDASHYSFFLYRSGVYYEPSCTQNVNHGVLVVGYGNLNGKDYWLVKNSWGLNFGDQGYIRMARNSGNHCGIASYPSYPEI.

A signal peptide spans 1-16 (MKWLVGLLPLCSYAVA). The propeptide at 17-114 (QVHKDPTLDH…VTYRSNSNQK (98 aa)) is activation peptide. Asparagine 104 is a glycosylation site (N-linked (GlcNAc...) asparagine). Intrachain disulfides connect cysteine 126-cysteine 224, cysteine 136-cysteine 180, cysteine 170-cysteine 213, and cysteine 272-cysteine 320. Residue cysteine 139 is part of the active site. Residues histidine 278 and asparagine 298 contribute to the active site.

It belongs to the peptidase C1 family.

It localises to the lysosome. Its subcellular location is the secreted. The protein localises to the cytoplasmic vesicle. The protein resides in the phagosome. The enzyme catalyses Similar to cathepsin L, but with much less activity on Z-Phe-Arg-|-NHMec, and more activity on the Z-Val-Val-Arg-|-Xaa compound.. Thiol protease. Key protease responsible for the removal of the invariant chain from MHC class II molecules and MHC class II antigen presentation. The bond-specificity of this proteinase is in part similar to the specificities of cathepsin L. The protein is Cathepsin S (CTSS) of Canis lupus familiaris (Dog).